Reading from the N-terminus, the 345-residue chain is Phosphoribosylformylglycinamidine cyclo-ligase (345 aa).

Belongs to the AIR synthase family.

Its subcellular location is the cytoplasm. It catalyses the reaction 2-formamido-N(1)-(5-O-phospho-beta-D-ribosyl)acetamidine + ATP = 5-amino-1-(5-phospho-beta-D-ribosyl)imidazole + ADP + phosphate + H(+). It participates in purine metabolism; IMP biosynthesis via de novo pathway; 5-amino-1-(5-phospho-D-ribosyl)imidazole from N(2)-formyl-N(1)-(5-phospho-D-ribosyl)glycinamide: step 2/2. In Escherichia coli O127:H6 (strain E2348/69 / EPEC), this protein is Phosphoribosylformylglycinamidine cyclo-ligase.